A 594-amino-acid chain; its full sequence is ATP-dependent zinc metalloprotease FtsH 1 (594 aa).

At 1–2 (MR) the chain is on the cytoplasmic side. A helical membrane pass occupies residues 3-23 (WWAGAALLLAALLFGRPAAAM). Residues 24-92 (EAQPVAYSEF…RVEFVRPADP (69 aa)) are Extracellular-facing. Residues 93–113 (IAFRTLLRFIPPLLILGAILW) form a helical membrane-spanning segment. Residues 114–594 (FTRRTAGGSG…ANSRGDEGNQ (481 aa)) are Cytoplasmic-facing. Position 186–193 (186–193 (GPPGTGKT)) interacts with ATP. Histidine 408 provides a ligand contact to Zn(2+). Glutamate 409 is an active-site residue. Zn(2+)-binding residues include histidine 412 and aspartate 485.

This sequence in the central section; belongs to the AAA ATPase family. In the C-terminal section; belongs to the peptidase M41 family. As to quaternary structure, homohexamer. Requires Zn(2+) as cofactor.

It is found in the cell membrane. Acts as a processive, ATP-dependent zinc metallopeptidase for both cytoplasmic and membrane proteins. Plays a role in the quality control of integral membrane proteins. This Symbiobacterium thermophilum (strain DSM 24528 / JCM 14929 / IAM 14863 / T) protein is ATP-dependent zinc metalloprotease FtsH 1.